A 211-amino-acid polypeptide reads, in one-letter code: ATP-dependent Clp protease proteolytic subunit (211 aa).

The active-site Nucleophile is Ser-106. Residue His-131 is part of the active site.

This sequence belongs to the peptidase S14 family. In terms of assembly, fourteen ClpP subunits assemble into 2 heptameric rings which stack back to back to give a disk-like structure with a central cavity, resembling the structure of eukaryotic proteasomes.

The protein resides in the cytoplasm. It carries out the reaction Hydrolysis of proteins to small peptides in the presence of ATP and magnesium. alpha-casein is the usual test substrate. In the absence of ATP, only oligopeptides shorter than five residues are hydrolyzed (such as succinyl-Leu-Tyr-|-NHMec, and Leu-Tyr-Leu-|-Tyr-Trp, in which cleavage of the -Tyr-|-Leu- and -Tyr-|-Trp bonds also occurs).. Functionally, cleaves peptides in various proteins in a process that requires ATP hydrolysis. Has a chymotrypsin-like activity. Plays a major role in the degradation of misfolded proteins. The protein is ATP-dependent Clp protease proteolytic subunit of Rhodopseudomonas palustris (strain BisA53).